Consider the following 332-residue polypeptide: Ribosomal RNA small subunit methyltransferase H (332 aa).

Residues G39–Y41, D56, F83, D100, and Q107 contribute to the S-adenosyl-L-methionine site.

It belongs to the methyltransferase superfamily. RsmH family.

It is found in the cytoplasm. It catalyses the reaction cytidine(1402) in 16S rRNA + S-adenosyl-L-methionine = N(4)-methylcytidine(1402) in 16S rRNA + S-adenosyl-L-homocysteine + H(+). Specifically methylates the N4 position of cytidine in position 1402 (C1402) of 16S rRNA. In Bartonella grahamii (strain as4aup), this protein is Ribosomal RNA small subunit methyltransferase H.